The chain runs to 288 residues: 33 kDa chaperonin (288 aa).

2 cysteine pairs are disulfide-bonded: Cys-235–Cys-237 and Cys-268–Cys-271.

The protein belongs to the HSP33 family. Under oxidizing conditions two disulfide bonds are formed involving the reactive cysteines. Under reducing conditions zinc is bound to the reactive cysteines and the protein is inactive.

Its subcellular location is the cytoplasm. Redox regulated molecular chaperone. Protects both thermally unfolding and oxidatively damaged proteins from irreversible aggregation. Plays an important role in the bacterial defense system toward oxidative stress. The chain is 33 kDa chaperonin from Streptococcus thermophilus (strain ATCC BAA-250 / LMG 18311).